The sequence spans 217 residues: UPF0319 protein HS_1349 (217 aa).

The signal sequence occupies residues 1-21; the sequence is MKFSFAALASAMLLTSTAAFA.

The protein belongs to the UPF0319 family.

The polypeptide is UPF0319 protein HS_1349 (Histophilus somni (strain 129Pt) (Haemophilus somnus)).